The following is a 249-amino-acid chain: Small ribosomal subunit protein eS6 (249 aa).

A Glycyl lysine isopeptide (Lys-Gly) (interchain with G-Cter in SUMO2) cross-link involves residue lysine 14. Position 35 is an ADP-ribosyl glutamic acid (glutamate 35). Arginine 137 carries the post-translational modification (3R)-3-hydroxyarginine. Serine 148 carries the phosphoserine modification. N6-acetyllysine is present on lysine 211. Positions 217–229 are enriched in basic and acidic residues; that stretch reads MKEAKEKRQEQIA. Residues 217 to 249 form a disordered region; sequence MKEAKEKRQEQIAKRRRLSSLRASTSKSESSQK. Serine 235 and serine 236 each carry phosphoserine; by RPS6KA1, RPS6KA3, DAPK1 and PASK. The span at 236–249 shows a compositional bias: low complexity; it reads SLRASTSKSESSQK. Residues serine 240, serine 242, serine 244, and serine 247 each carry the phosphoserine modification.

This sequence belongs to the eukaryotic ribosomal protein eS6 family. As to quaternary structure, component of the small ribosomal subunit. Part of the small subunit (SSU) processome, composed of more than 70 proteins and the RNA chaperone small nucleolar RNA (snoRNA) U3. Ribosomal protein S6 is the major substrate of protein kinases in eukaryote ribosomes. The phosphorylation is stimulated by growth factors, tumor promoting agents, and mitogens. It is dephosphorylated at growth arrest. Phosphorylated at Ser-235 and Ser-236 by RPS6KA1 and RPS6KA3; phosphorylation at these sites facilitates the assembly of the pre-initiation complex. Post-translationally, specifically hydroxylated (with R stereochemistry) at C-3 of Arg-137 by KDM8. In terms of processing, mono-ADP-ribosylation at Glu-35 by PARP16 inhibits polysome assembly and mRNA loading, thereby inhibiting protein translation.

The protein localises to the cytoplasm. It localises to the nucleus. It is found in the nucleolus. Its function is as follows. Component of the 40S small ribosomal subunit. Plays an important role in controlling cell growth and proliferation through the selective translation of particular classes of mRNA. Part of the small subunit (SSU) processome, first precursor of the small eukaryotic ribosomal subunit. During the assembly of the SSU processome in the nucleolus, many ribosome biogenesis factors, an RNA chaperone and ribosomal proteins associate with the nascent pre-rRNA and work in concert to generate RNA folding, modifications, rearrangements and cleavage as well as targeted degradation of pre-ribosomal RNA by the RNA exosome. The polypeptide is Small ribosomal subunit protein eS6 (RPS6) (Bos taurus (Bovine)).